The chain runs to 225 residues: Protein GrpE (225 aa).

Polar residues predominate over residues 1-15; that stretch reads MSGDASTPEQDQNVV. Disordered stretches follow at residues 1-48 and 198-225; these read MSGD…DRMQ and VSMG…AEEA. Positions 201 to 225 are enriched in low complexity; that stretch reads GPGPSDPGSAPAEAAAAPDQTAEEA.

This sequence belongs to the GrpE family. Homodimer.

Its subcellular location is the cytoplasm. In terms of biological role, participates actively in the response to hyperosmotic and heat shock by preventing the aggregation of stress-denatured proteins, in association with DnaK and GrpE. It is the nucleotide exchange factor for DnaK and may function as a thermosensor. Unfolded proteins bind initially to DnaJ; upon interaction with the DnaJ-bound protein, DnaK hydrolyzes its bound ATP, resulting in the formation of a stable complex. GrpE releases ADP from DnaK; ATP binding to DnaK triggers the release of the substrate protein, thus completing the reaction cycle. Several rounds of ATP-dependent interactions between DnaJ, DnaK and GrpE are required for fully efficient folding. In Synechococcus sp. (strain CC9605), this protein is Protein GrpE.